The chain runs to 86 residues: Large ribosomal subunit protein bL27 (86 aa).

The disordered stretch occupies residues 1–24 (MAHKKAMGSTENTRDSNPSYLGVK). Over residues 9 to 19 (STENTRDSNPS) the composition is skewed to polar residues.

This sequence belongs to the bacterial ribosomal protein bL27 family.

The sequence is that of Large ribosomal subunit protein bL27 from Salinibacter ruber (strain DSM 13855 / M31).